Here is an 869-residue protein sequence, read N- to C-terminus: Protein translocase subunit SecA (869 aa).

ATP-binding positions include Q88, 106–110 (GEGKT), and D509. Basic and acidic residues predominate over residues 818–840 (QDEGLKFNQREGEDAPAVREKKI). The interval 818-869 (QDEGLKFNQREGEDAPAVREKKIPRNSPCPCGSGKKYKDCCGKSGPKKGILA) is disordered. Residues C846, C848, C857, and C858 each coordinate Zn(2+).

It belongs to the SecA family. In terms of assembly, monomer and homodimer. Part of the essential Sec protein translocation apparatus which comprises SecA, SecYEG and auxiliary proteins SecDF-YajC and YidC. It depends on Zn(2+) as a cofactor.

It is found in the cell inner membrane. Its subcellular location is the cytoplasm. It catalyses the reaction ATP + H2O + cellular proteinSide 1 = ADP + phosphate + cellular proteinSide 2.. Its function is as follows. Part of the Sec protein translocase complex. Interacts with the SecYEG preprotein conducting channel. Has a central role in coupling the hydrolysis of ATP to the transfer of proteins into and across the cell membrane, serving as an ATP-driven molecular motor driving the stepwise translocation of polypeptide chains across the membrane. The chain is Protein translocase subunit SecA from Campylobacter curvus (strain 525.92).